Reading from the N-terminus, the 1351-residue chain is Spike glycoprotein (1351 aa).

An N-terminal signal peptide occupies residues 1–12 (MFLIIFILPTTL). Residues 13-1295 (AVIGDFNCTN…GTYEMYVKWP (1283 aa)) are Extracellular-facing. Positions 14 to 294 (VIGDFNCTNS…SFLSEIQCKT (281 aa)) constitute a BetaCoV S1-NTD domain. N-linked (GlcNAc...) asparagine; by host glycosylation is found at Asn-19, Asn-29, Asn-58, Asn-114, Asn-132, Asn-171, Asn-188, Asn-192, and Asn-251. 3 disulfides stabilise this stretch: Cys-20-Cys-156, Cys-151-Cys-183, and Cys-163-Cys-242. 2 disulfides stabilise this stretch: Cys-282–Cys-292 and Cys-327–Cys-352. The BetaCoV S1-CTD domain maps to 325–605 (PDCDIDNWLN…GINSGTTCSN (281 aa)). N-linked (GlcNAc...) asparagine; by host glycosylation is found at Asn-335 and Asn-355. Intrachain disulfides connect Cys-370–Cys-423 and Cys-382–Cys-603. Asn-433, Asn-454, Asn-561, Asn-664, Asn-684, Asn-703, Asn-725, Asn-771, Asn-776, and Asn-793 each carry an N-linked (GlcNAc...) asparagine; by host glycan. Fusion peptide regions lie at residues 901-922 (SLLE…VEAY) and 920-940 (EAYN…VQSF). N-linked (GlcNAc...) asparagine; by host glycosylation occurs at Asn-924. Cys-925 and Cys-936 are disulfide-bonded. The segment at 1001–1051 (QKLIANAFNKALLSIQNGFTATNSALAKIQSVVNANAQALNSLLQQLFNKF) is heptad repeat 1. Residues 1030 to 1074 (QSVVNANAQALNSLLQQLFNKFGAISSSLQEILSRLDNLEAQVQI) adopt a coiled-coil conformation. 8 N-linked (GlcNAc...) asparagine; by host glycosylation sites follow: Asn-1181, Asn-1211, Asn-1221, Asn-1226, Asn-1240, Asn-1247, Asn-1255, and Asn-1276. The segment at 1245 to 1284 (APNLTFNSHINATFLDLYYEMNVIQESIKSLNSSFINLKE) is heptad repeat 2. A coiled-coil region spans residues 1257-1285 (TFLDLYYEMNVIQESIKSLNSSFINLKEI). The chain crosses the membrane as a helical span at residues 1296-1316 (WYIWLLIVILFIIFLMILFFI). Topologically, residues 1317–1351 (CCCTGCGSACFSKCHNCCDEYGGHNDFVIKASHDD) are cytoplasmic. Positions 1347–1351 (ASHDD) match the KxHxx motif.

This sequence belongs to the betacoronaviruses spike protein family. As to quaternary structure, homotrimer; each monomer consists of a S1 and a S2 subunit. The resulting peplomers protrude from the virus surface as spikes. Post-translationally, specific enzymatic cleavages in vivo yield mature proteins. The precursor is processed into S1 and S2 by host cell furin or another cellular protease to yield the mature S1 and S2 proteins. Additionally, a second cleavage leads to the release of a fusion peptide after viral attachment to host cell receptor. In terms of processing, the cytoplasmic Cys-rich domain is palmitoylated. Spike glycoprotein is digested within host endosomes.

It localises to the virion membrane. It is found in the host endoplasmic reticulum-Golgi intermediate compartment membrane. The protein localises to the host cell membrane. Attaches the virion to the cell membrane by interacting with host receptor, initiating the infection. Functionally, mediates fusion of the virion and cellular membranes by acting as a class I viral fusion protein. Under the current model, the protein has at least three conformational states: pre-fusion native state, pre-hairpin intermediate state, and post-fusion hairpin state. During viral and target cell membrane fusion, the coiled coil regions (heptad repeats) assume a trimer-of-hairpins structure, positioning the fusion peptide in close proximity to the C-terminal region of the ectodomain. The formation of this structure appears to drive apposition and subsequent fusion of viral and target cell membranes. Its function is as follows. Acts as a viral fusion peptide which is unmasked following S2 cleavage occurring upon virus endocytosis. This Human coronavirus HKU1 (isolate N5) (HCoV-HKU1) protein is Spike glycoprotein.